The primary structure comprises 60 residues: UPF0434 protein YcaR (60 aa).

The protein belongs to the UPF0434 family.

This chain is UPF0434 protein YcaR, found in Escherichia coli O81 (strain ED1a).